Reading from the N-terminus, the 326-residue chain is Cytosolic Fe-S cluster assembly factor NBP35 (326 aa).

The interval 1–38 (MTEIANGQQILPPDYTLKEPEPEHCPGPESENAGKGDS) is disordered. The span at 16–26 (TLKEPEPEHCP) shows a compositional bias: basic and acidic residues. [4Fe-4S] cluster-binding residues include Cys-25, Cys-39, Cys-42, and Cys-48. 78 to 85 (GKGGVGKS) is an ATP binding site. Residues Cys-251 and Cys-254 each coordinate [4Fe-4S] cluster.

It belongs to the Mrp/NBP35 ATP-binding proteins family. NUBP1/NBP35 subfamily. In terms of assembly, heterotetramer of 2 NBP35 and 2 CFD1 chains. It depends on [4Fe-4S] cluster as a cofactor.

The protein resides in the cytoplasm. Its subcellular location is the nucleus. In terms of biological role, component of the cytosolic iron-sulfur (Fe/S) protein assembly (CIA) machinery. Required for maturation of extramitochondrial Fe-S proteins. The NBP35-CFD1 heterotetramer forms a Fe-S scaffold complex, mediating the de novo assembly of an Fe-S cluster and its transfer to target apoproteins. Required for biogenesis and export of both ribosomal subunits, which may reflect a role in assembly of the Fe/S clusters in RLI1, a protein which performs rRNA processing and ribosome export. This is Cytosolic Fe-S cluster assembly factor NBP35 from Kluyveromyces lactis (strain ATCC 8585 / CBS 2359 / DSM 70799 / NBRC 1267 / NRRL Y-1140 / WM37) (Yeast).